The chain runs to 1023 residues: Peroxisome proliferator-activated receptor gamma coactivator 1-beta (1023 aa).

Residues 1–91 (MAGNDCGALL…LFQIDSENEA (91 aa)) form an abolishes DNA transcriptional activity when missing region. The tract at residues 122 to 148 (LSCTSASPAPSSAPPSPAPEKPSAPAP) is disordered. The span at 132–146 (SSAPPSPAPEKPSAP) shows a compositional bias: pro residues. Residues 156-160 (LQKLL) carry the LXXLL motif 1 motif. Disordered stretches follow at residues 165-210 (YPTS…QSQS), 237-278 (LQSP…PGAP), and 302-331 (RKLPPQTPEPLPKACSNPSQQVRSRPWSRH). The LXXLL motif 2 motif lies at 343-347 (LRELL). Disordered regions lie at residues 369 to 463 (LTPR…LPWT), 520 to 567 (RELG…QLPP), 601 to 623 (TAGLTPPTTPPYKPTEEDPFKPD), and 636 to 683 (LPSP…GQKR). Ser-384 is subject to Phosphoserine. The span at 412 to 422 (LRLEVKREVRR) shows a compositional bias: basic and acidic residues. Positions 429–450 (QEEEDEEEEEEEEEEEKEEEEE) are enriched in acidic residues. Ser-524 is modified (phosphoserine). The span at 614–623 (PTEEDPFKPD) shows a compositional bias: basic and acidic residues. Ser-638 bears the Phosphoserine mark. The HCFC1-binding-motif (HBM) motif lies at 691–694 (DHDY). 2 disordered regions span residues 717 to 758 (VHLE…LRDH) and 779 to 867 (DLAS…WSPA). The segment covering 793–805 (EDSSSSSGESSFL) has biased composition (low complexity). Residues 806–825 (PEEEEEEGEEEEEDDEEEDS) show a composition bias toward acidic residues. Low complexity predominate over residues 849-866 (CSRSRSSSGSSPCHSWSP). The region spanning 902–976 (RVVYIQNLSS…RNEPSFQLSY (75 aa)) is the RRM domain.

As to quaternary structure, interacts with hepatocyte nuclear factor 4-alpha/HNF4A, Sterol regulatory binding transcription factor 1/SREBF1, PPAR-alpha/PPARA, thyroid hormone receptor beta/THRB and host cell factor/HCFC1. Interacts with estrogen-related receptor gamma/ESRRG and alpha/ESRRA. Interacts with PRDM16. Interacts with estrogen receptor alpha/ESR1. As to expression, ubiquitous with higher expression in heart, brain and skeletal muscle.

Its subcellular location is the nucleus. Its function is as follows. Plays a role of stimulator of transcription factors and nuclear receptors activities. Activates transcriptional activity of estrogen receptor alpha, nuclear respiratory factor 1 (NRF1) and glucocorticoid receptor in the presence of glucocorticoids. May play a role in constitutive non-adrenergic-mediated mitochondrial biogenesis as suggested by increased basal oxygen consumption and mitochondrial number when overexpressed. May be involved in fat oxidation and non-oxidative glucose metabolism and in the regulation of energy expenditure. Induces the expression of PERM1 in the skeletal muscle in an ESRRA-dependent manner. The polypeptide is Peroxisome proliferator-activated receptor gamma coactivator 1-beta (PPARGC1B) (Homo sapiens (Human)).